Reading from the N-terminus, the 609-residue chain is Elongation factor 4 (609 aa).

The tr-type G domain maps to 11-193 (ERIRNFSIIA…QIVEKIPAPS (183 aa)). GTP-binding positions include 23–28 (DHGKST) and 140–143 (NKID).

It belongs to the TRAFAC class translation factor GTPase superfamily. Classic translation factor GTPase family. LepA subfamily.

The protein localises to the cell membrane. It carries out the reaction GTP + H2O = GDP + phosphate + H(+). In terms of biological role, required for accurate and efficient protein synthesis under certain stress conditions. May act as a fidelity factor of the translation reaction, by catalyzing a one-codon backward translocation of tRNAs on improperly translocated ribosomes. Back-translocation proceeds from a post-translocation (POST) complex to a pre-translocation (PRE) complex, thus giving elongation factor G a second chance to translocate the tRNAs correctly. Binds to ribosomes in a GTP-dependent manner. The protein is Elongation factor 4 of Geobacillus thermodenitrificans (strain NG80-2).